A 158-amino-acid polypeptide reads, in one-letter code: Leptin-B (158 aa).

The first 19 residues, 1–19 (MYMPLALVYASFLTLPAST), serve as a signal peptide directing secretion. An intrachain disulfide couples Cys-114 to Cys-158.

Belongs to the leptin family. Highly expressed in the brain and eye. Expressed at low levels in muscle and skin.

It is found in the secreted. Its function is as follows. May function as part of a signaling pathway that acts to regulate the size of the body fat depot. This Oryzias latipes (Japanese rice fish) protein is Leptin-B.